A 253-amino-acid polypeptide reads, in one-letter code: 3-deoxy-manno-octulosonate cytidylyltransferase (253 aa).

The protein belongs to the KdsB family.

The protein localises to the cytoplasm. It catalyses the reaction 3-deoxy-alpha-D-manno-oct-2-ulosonate + CTP = CMP-3-deoxy-beta-D-manno-octulosonate + diphosphate. The protein operates within nucleotide-sugar biosynthesis; CMP-3-deoxy-D-manno-octulosonate biosynthesis; CMP-3-deoxy-D-manno-octulosonate from 3-deoxy-D-manno-octulosonate and CTP: step 1/1. Its pathway is bacterial outer membrane biogenesis; lipopolysaccharide biosynthesis. Its function is as follows. Activates KDO (a required 8-carbon sugar) for incorporation into bacterial lipopolysaccharide in Gram-negative bacteria. In Neisseria gonorrhoeae (strain ATCC 700825 / FA 1090), this protein is 3-deoxy-manno-octulosonate cytidylyltransferase.